We begin with the raw amino-acid sequence, 574 residues long: DNA-directed primase/polymerase protein (574 aa).

A coiled-coil region spans residues 2 to 22 (KRKWEERVKKVEELASYYERN). Substrate is bound by residues arginine 76, 116–118 (DLE), 167–171 (KFSRH), 291–294 (RNFR), and lysine 300. Residues aspartate 116 and glutamate 118 each contribute to the Mn(2+) site. Residues cysteine 424, histidine 431, cysteine 451, and cysteine 456 each contribute to the Zn(2+) site. The short motif at 424–457 (CENIGRAHRSNNIMILVDLKKEVWYQKCHDPVCR) is the Zinc knuckle motif element.

It belongs to the eukaryotic-type primase small subunit family. Mn(2+) is required as a cofactor.

Its subcellular location is the nucleus. It is found in the mitochondrion matrix. The protein localises to the chromosome. The catalysed reaction is ssDNA + n NTP = ssDNA/pppN(pN)n-1 hybrid + (n-1) diphosphate.. The enzyme catalyses DNA(n) + a 2'-deoxyribonucleoside 5'-triphosphate = DNA(n+1) + diphosphate. In terms of biological role, DNA primase and DNA polymerase required to tolerate replication-stalling lesions by bypassing them. Required to facilitate mitochondrial and nuclear replication fork progression by initiating de novo DNA synthesis using dNTPs and acting as an error-prone DNA polymerase able to bypass certain DNA lesions. Shows a high capacity to tolerate DNA damage lesions such as 8oxoG and abasic sites in DNA. Provides different translesion synthesis alternatives when DNA replication is stalled: able to synthesize DNA primers downstream of lesions, such as UV lesions, R-loops and G-quadruplexes, to allow DNA replication to continue. Can also realign primers ahead of 'unreadable lesions' such as abasic sites and 6-4 photoproduct (6-4 pyrimidine-pyrimidinone), thereby skipping the lesion. Repriming avoids fork degradation while leading to accumulation of internal ssDNA gaps behind the forks. Also able to incorporate nucleotides opposite DNA lesions such as 8oxoG, like a regular translesion synthesis DNA polymerase. Also required for reinitiating stalled forks after ultraviolet (UV) damage during nuclear DNA replication. Required for mitochondrial DNA (mtDNA) synthesis and replication, by reinitiating synthesis after UV damage or in the presence of chain-terminating nucleotides. In addition to its role in DNA damage response, also required to maintain efficient nuclear and mitochondrial DNA replication in unperturbed cells. This is DNA-directed primase/polymerase protein from Gallus gallus (Chicken).